The primary structure comprises 29 residues: uncharacterized protein (29 aa).

The protein resides in the plastid. It is found in the chloroplast. This is an uncharacterized protein from Trieres chinensis (Marine centric diatom).